Reading from the N-terminus, the 293-residue chain is Aquaporin-6 (293 aa).

Residues 1–22 (MEPGLCSRAYLLVGGLWTAISK) lie on the Cytoplasmic side of the membrane. Residues 23 to 43 (ALFAEFLATGLYVFFGVGSVL) traverse the membrane as a helical segment. Residues 44 to 51 (PWPVALPS) lie on the Extracellular side of the membrane. The chain crosses the membrane as a helical span at residues 52-70 (VLQIAITFNLATATAVQIS). Residues 71–75 (WKTSG) lie on the Cytoplasmic side of the membrane. An intramembrane region (discontinuously helical) is located at residues 76–85 (AHANPAVTLA). The NPA 1 signature appears at 79–81 (NPA). Residues 86–96 (YLVGSHISLPR) are Cytoplasmic-facing. A helical membrane pass occupies residues 97–118 (AMAYIAAQLAGATAGAALLYGV). Topologically, residues 119-138 (TPGGIRETLGVNVVHNSTST) are extracellular. N-linked (GlcNAc...) asparagine glycosylation is present at N134. The helical transmembrane segment at 139 to 159 (GQAVAVELVLTLQLVLCVFAS) threads the bilayer. Residues 160–165 (MDGRQT) lie on the Cytoplasmic side of the membrane. The chain crosses the membrane as a helical span at residues 166-185 (LASPAAMIGTSVALGHLIGI). Residues 186–189 (YFTG) lie on the Extracellular side of the membrane. An intramembrane region (discontinuously helical) is located at residues 190–202 (CSMNPARSFGPAV). Residues 193–195 (NPA) carry the NPA 2 motif. At 203 to 210 (IVGKFAVH) the chain is on the extracellular side. Residues 211–231 (WIFWVGPLTGAVLASLIYNFI) form a helical membrane-spanning segment. Residues 232–293 (LFPDTKTVAQ…RSFSFTLGLC (62 aa)) lie on the Cytoplasmic side of the membrane.

Belongs to the MIP/aquaporin (TC 1.A.8) family. In terms of assembly, homotetramer; each monomer provides an independent solute pore.

The protein localises to the cytoplasmic vesicle membrane. It catalyses the reaction nitrate(in) = nitrate(out). The enzyme catalyses iodide(out) = iodide(in). It carries out the reaction bromide(in) = bromide(out). The catalysed reaction is chloride(in) = chloride(out). It catalyses the reaction Na(+)(in) = Na(+)(out). The enzyme catalyses H2O(in) = H2O(out). It carries out the reaction CO2(out) = CO2(in). The catalysed reaction is NH4(+)(in) = NH4(+)(out). Functionally, aquaporins form homotetrameric transmembrane channels, with each monomer independently mediating water transport across the plasma membrane along its osmotic gradient. Unlike classical aquaporins, AQP6 is an intracellular channel with selective anion permeability, particularly for nitrate, and exhibits very low water permeability. It may also facilitate the transport of gases, such as CO2 and NH4(+), as demonstrated in vitro. The chain is Aquaporin-6 from Mus musculus (Mouse).